Reading from the N-terminus, the 268-residue chain is MKNNEYKYGGVLMTKPYYNKNKMILVHSDTFKFLSKMKPESMDMIFADPPYFLSNGGISNSGGQVVSVDKGDWDKISSFEEKHEFNRKWIRLAKEVLKPNGTVWISGSLHNIYSVGMALEQEGFKILNNITWQKTNPAPNLSCRYFTHSTETILWARKNDKKARHYYNYDLMKELNDGKQMKDVWTGSLTKKVEKWAGKHPTQKPEYLLERIILASTKEGDYILDPFVGSGTTGVVAKRLGRRFIGIDAEKEYLKIARKRLEAENETN.

The protein belongs to the N(4)/N(6)-methyltransferase family. Homodimer.

It catalyses the reaction a 2'-deoxyadenosine in DNA + S-adenosyl-L-methionine = an N(6)-methyl-2'-deoxyadenosine in DNA + S-adenosyl-L-homocysteine + H(+). Functionally, a beta subtype methylase that recognizes the single- or double-stranded sequence 5'-GATC-3', methylates A-2 on one or both strands (respectively), and protects the DNA from cleavage by the DpnII endonuclease. Further methylates DNA that is already methylated at 5'-GATC-3' sites. Essential for establishment of a previously unmethylated plasmid transformed into the cell as single-stranded DNA, enhances plasmid transfer to DpnII-containing strains of Streptococcus pneumoniae. This chain is Type II methyltransferase M2.DpnII, found in Streptococcus pneumoniae.